The following is a 427-amino-acid chain: MTAIVDIIGREILDSRGNPTVEVDVALEDGAMGRAAVPSGASTGAHEAVELRDDDQTRYFGKGVRKAVDAINGEIFDAIGGMDAEQQAQIDEILIGLDGTANKSRLGANAILGVSLALARAAADSLDMPLYRYVGGVSARTLPVPMMNIVNGGVHADNPIDFQEFMIMPVGAKTFSEGLRCGSEIFHTLRAELKKAGHNTNVGDEGGFAPNLPSASAALDFIMGAIVKAGYKPGDDVALALDPAASEFFKDGKYVYAGEGKTRSIEEQARYLAKLASDYPIVSIEDGMAEDDFEGWKLLTDLIGKSCQLVGDDLFVTNVTRLADGIGKGLANSILIKVNQIGTLTETLAAVEMAYKAGYTAVMSHRSGETEDSTIADLAVATNCGQIKTGSLSRSDRAAKYNQLLRIEQQLGAQARYGGRAALKALA.

Q163 contributes to the (2R)-2-phosphoglycerate binding site. E205 serves as the catalytic Proton donor. Positions 242, 285, and 312 each coordinate Mg(2+). Positions 337, 366, 367, and 388 each coordinate (2R)-2-phosphoglycerate. K337 serves as the catalytic Proton acceptor.

The protein belongs to the enolase family. It depends on Mg(2+) as a cofactor.

It localises to the cytoplasm. Its subcellular location is the secreted. It is found in the cell surface. It carries out the reaction (2R)-2-phosphoglycerate = phosphoenolpyruvate + H2O. The protein operates within carbohydrate degradation; glycolysis; pyruvate from D-glyceraldehyde 3-phosphate: step 4/5. Catalyzes the reversible conversion of 2-phosphoglycerate (2-PG) into phosphoenolpyruvate (PEP). It is essential for the degradation of carbohydrates via glycolysis. The polypeptide is Enolase (Nitrobacter hamburgensis (strain DSM 10229 / NCIMB 13809 / X14)).